A 94-amino-acid chain; its full sequence is MSRSLKKGPFCDEHLMKKVEELNKNDEKKIIKTWSRRSTIFPNFVGHTIAVHDGRKHVPVYITDDMVGHKLGEFVPTRTYKGHIKNEKTSKVRN.

The protein belongs to the universal ribosomal protein uS19 family.

Its function is as follows. Protein S19 forms a complex with S13 that binds strongly to the 16S ribosomal RNA. This chain is Small ribosomal subunit protein uS19, found in Finegoldia magna (strain ATCC 29328 / DSM 20472 / WAL 2508) (Peptostreptococcus magnus).